We begin with the raw amino-acid sequence, 767 residues long: DNA topoisomerase 1 (767 aa).

Residues 1–23 (MSGDHLHNDSQIEADFRLNDSHK) show a composition bias toward basic and acidic residues. The tract at residues 1 to 201 (MSGDHLHNDS…NKKKKPKKEE (201 aa)) is disordered. Residue Ser2 is modified to N-acetylserine. Ser2 and Ser10 each carry phosphoserine. The span at 24 to 39 (HKDKHKDREHRHKEHK) shows a compositional bias: basic residues. Residues 40-110 (KDKEKDREKS…DAKIKKEKEN (71 aa)) are compositionally biased toward basic and acidic residues. A Phosphoserine modification is found at Ser59. Lys103 is covalently cross-linked (Glycyl lysine isopeptide (Lys-Gly) (interchain with G-Cter in SUMO2)). Lys105 participates in a covalent cross-link: Glycyl lysine isopeptide (Lys-Gly) (interchain with G-Cter in SUMO); alternate. A Glycyl lysine isopeptide (Lys-Gly) (interchain with G-Cter in SUMO2); alternate cross-link involves residue Lys105. At Ser114 the chain carries Phosphoserine. Lys119 is covalently cross-linked (Glycyl lysine isopeptide (Lys-Gly) (interchain with G-Cter in SUMO); alternate). Lys119 participates in a covalent cross-link: Glycyl lysine isopeptide (Lys-Gly) (interchain with G-Cter in SUMO2); alternate. A Glycyl lysine isopeptide (Lys-Gly) (interchain with G-Cter in SUMO1); alternate cross-link involves residue Lys119. Residues 131–168 (PKEDIKPLKRPRDEDDADYKPKKIKTEDIKKEKKRKLE) are compositionally biased toward basic and acidic residues. Glycyl lysine isopeptide (Lys-Gly) (interchain with G-Cter in SUMO2) cross-links involve residues Lys136 and Lys150. Lys155 participates in a covalent cross-link: Glycyl lysine isopeptide (Lys-Gly) (interchain with G-Cter in SUMO); alternate. Lys155 is covalently cross-linked (Glycyl lysine isopeptide (Lys-Gly) (interchain with G-Cter in SUMO2); alternate). Residues Lys160 and Lys166 each participate in a glycyl lysine isopeptide (Lys-Gly) (interchain with G-Cter in SUMO2) cross-link. Lys174 is covalently cross-linked (Glycyl lysine isopeptide (Lys-Gly) (interchain with G-Cter in SUMO2); alternate). Lys174 is subject to N6-acetyllysine; alternate. Over residues 181–201 (KDKDKKGAESDNKKKKPKKEE) the composition is skewed to basic and acidic residues. A Glycyl lysine isopeptide (Lys-Gly) (interchain with G-Cter in SUMO2) cross-link involves residue Lys206. Residue Lys282 is modified to N6-acetyllysine. Lys338 is covalently cross-linked (Glycyl lysine isopeptide (Lys-Gly) (interchain with G-Cter in SUMO2)). 2 interaction with DNA regions span residues 427–428 (KY) and 490–495 (RAGNEK). The Topo IB-type catalytic domain occupies 434 to 767 (SSRIKGEKDW…IDMTDEDYEF (334 aa)). A Phosphoserine; by CK2 modification is found at Ser508. Residue Lys551 forms a Glycyl lysine isopeptide (Lys-Gly) (interchain with G-Cter in SUMO2) linkage. Positions 587 to 589 (TAK) are interaction with DNA. Residues Lys644, Lys702, and Lys714 each participate in a glycyl lysine isopeptide (Lys-Gly) (interchain with G-Cter in SUMO2) cross-link. The active-site O-(3'-phospho-DNA)-tyrosine intermediate is the Tyr725.

This sequence belongs to the type IB topoisomerase family. In terms of assembly, monomer. Interacts with ERCC6. Interacts with TPRN; TPRN interacts with a number of DNA damage response proteins, is recruited to sites of DNA damage and may play a role in DNA damage repair. In terms of processing, sumoylated. Lys-119 is the main site of sumoylation. Sumoylation plays a role in partitioning TOP1 between nucleoli and nucleoplasm. Levels are dramatically increased on camptothecin (CPT) treatment. Post-translationally, phosphorylation at Ser-508 by CK2 increases binding to supercoiled DNA and sensitivity to camptothecin.

It is found in the nucleus. It localises to the nucleolus. Its subcellular location is the nucleoplasm. The enzyme catalyses ATP-independent breakage of single-stranded DNA, followed by passage and rejoining.. Its activity is regulated as follows. Specifically inhibited by camptothecin (CPT), a plant alkaloid with antitumor activity. Releases the supercoiling and torsional tension of DNA introduced during the DNA replication and transcription by transiently cleaving and rejoining one strand of the DNA duplex. Introduces a single-strand break via transesterification at a target site in duplex DNA. The scissile phosphodiester is attacked by the catalytic tyrosine of the enzyme, resulting in the formation of a DNA-(3'-phosphotyrosyl)-enzyme intermediate and the expulsion of a 5'-OH DNA strand. The free DNA strand then rotates around the intact phosphodiester bond on the opposing strand, thus removing DNA supercoils. Finally, in the religation step, the DNA 5'-OH attacks the covalent intermediate to expel the active-site tyrosine and restore the DNA phosphodiester backbone. Regulates the alternative splicing of tissue factor (F3) pre-mRNA in endothelial cells. Involved in the circadian transcription of the core circadian clock component BMAL1 by altering the chromatin structure around the ROR response elements (ROREs) on the BMAL1 promoter. The protein is DNA topoisomerase 1 (TOP1) of Cricetulus griseus (Chinese hamster).